A 291-amino-acid chain; its full sequence is tRNA N(3)-cytidine methyltransferase METTL8, mitochondrial (291 aa).

A mitochondrion-targeting transit peptide spans 1-21 (MNMIWRNSISCLRLGKVPHRY). Lys-80 is covalently cross-linked (Glycyl lysine isopeptide (Lys-Gly) (interchain with G-Cter in SUMO)). Residues Trp-89 and Tyr-93 each contribute to the S-adenosyl-L-methionine site. A disordered region spans residues 141-187 (FSRMHCPTVPDEKNHYEKSSGSSEGQSKTESDFSNLDSEKHKKGPME). The span at 159–168 (SSGSSEGQSK) shows a compositional bias: low complexity. Residues Gly-204, Asp-230, and Asp-256 each coordinate S-adenosyl-L-methionine.

It belongs to the methyltransferase superfamily. METL family. In terms of assembly, interacts with EP300.

Its subcellular location is the mitochondrion. It catalyses the reaction cytidine(32) in tRNA(Ser) + S-adenosyl-L-methionine = N(3)-methylcytidine(32) in tRNA(Ser) + S-adenosyl-L-homocysteine + H(+). It carries out the reaction cytidine(32) in tRNA(Thr) + S-adenosyl-L-methionine = N(3)-methylcytidine(32) in tRNA(Thr) + S-adenosyl-L-homocysteine + H(+). The catalysed reaction is a cytidine in mRNA + S-adenosyl-L-methionine = an N(3)-methylcytidine in mRNA + S-adenosyl-L-homocysteine + H(+). Its function is as follows. Mitochondrial S-adenosyl-L-methionine-dependent methyltransferase that mediates N(3)-methylcytidine modification of residue 32 of the tRNA anticodon loop of mitochondrial tRNA(Ser)(UCN) and tRNA(Thr). N(3)-methylcytidine methylation modification regulates mitochondrial translation efficiency and is required for activity of the respiratory chain. N(3)-methylcytidine methylation of mitochondrial tRNA(Ser)(UCN) requires the formation of N(6)-dimethylallyladenosine(37) (i6A37) by TRIT1 as prerequisite. May also mediate N(3)-methylcytidine modification of mRNAs. The existence of N(3)-methylcytidine modification on mRNAs is however unclear, and additional evidences are required to confirm the role of the N(3)-methylcytidine-specific mRNA methyltransferase activity of METTL8 in vivo. The polypeptide is tRNA N(3)-cytidine methyltransferase METTL8, mitochondrial (Homo sapiens (Human)).